A 291-amino-acid polypeptide reads, in one-letter code: Ribose-phosphate pyrophosphokinase (291 aa).

ATP-binding positions include 34–36 and 93–94; these read DGE and RQ. 2 residues coordinate Mg(2+): His-127 and Asp-165. The active site involves Lys-188. D-ribose 5-phosphate contacts are provided by residues Arg-190, Asp-216, and 220 to 224; that span reads STGGT.

Belongs to the ribose-phosphate pyrophosphokinase family. Class III (archaeal) subfamily. Requires Mg(2+) as cofactor.

The protein localises to the cytoplasm. It carries out the reaction D-ribose 5-phosphate + ATP = 5-phospho-alpha-D-ribose 1-diphosphate + AMP + H(+). It participates in metabolic intermediate biosynthesis; 5-phospho-alpha-D-ribose 1-diphosphate biosynthesis; 5-phospho-alpha-D-ribose 1-diphosphate from D-ribose 5-phosphate (route I): step 1/1. In terms of biological role, involved in the biosynthesis of the central metabolite phospho-alpha-D-ribosyl-1-pyrophosphate (PRPP) via the transfer of pyrophosphoryl group from ATP to 1-hydroxyl of ribose-5-phosphate (Rib-5-P). The polypeptide is Ribose-phosphate pyrophosphokinase (Sulfurisphaera tokodaii (strain DSM 16993 / JCM 10545 / NBRC 100140 / 7) (Sulfolobus tokodaii)).